Reading from the N-terminus, the 354-residue chain is Carbamoyl phosphate synthase arginine-specific small chain (354 aa).

Residues 1 to 163 (MKAYLHVASG…RTIETYGEGG (163 aa)) form a CPSase region. Residues serine 46, glycine 213, and glycine 215 each contribute to the L-glutamine site. In terms of domain architecture, Glutamine amidotransferase type-1 spans 165–352 (HLVLVDFGYK…LQTVFKGENV (188 aa)). Catalysis depends on cysteine 240, which acts as the Nucleophile. Residues leucine 241, glutamine 244, asparagine 282, and tyrosine 285 each coordinate L-glutamine. Residues histidine 325 and glutamate 327 contribute to the active site.

It belongs to the CarA family. As to quaternary structure, composed of two chains; the small (or glutamine) chain promotes the hydrolysis of glutamine to ammonia, which is used by the large (or ammonia) chain to synthesize carbamoyl phosphate. Tetramer of heterodimers (alpha,beta)4.

It catalyses the reaction hydrogencarbonate + L-glutamine + 2 ATP + H2O = carbamoyl phosphate + L-glutamate + 2 ADP + phosphate + 2 H(+). It carries out the reaction L-glutamine + H2O = L-glutamate + NH4(+). Its pathway is amino-acid biosynthesis; L-arginine biosynthesis; carbamoyl phosphate from bicarbonate: step 1/1. Functionally, small subunit of the glutamine-dependent carbamoyl phosphate synthetase (CPSase). CPSase catalyzes the formation of carbamoyl phosphate from the ammonia moiety of glutamine, carbonate, and phosphate donated by ATP, constituting the first step of the biosynthetic pathway leading to arginine and/or urea. The small subunit (glutamine amidotransferase) binds and cleaves glutamine to supply the large subunit with the substrate ammonia. This chain is Carbamoyl phosphate synthase arginine-specific small chain, found in Geobacillus stearothermophilus (Bacillus stearothermophilus).